We begin with the raw amino-acid sequence, 497 residues long: Alkane hydroxylase MAH1 (497 aa).

The chain crosses the membrane as a helical span at residues 3 to 23; sequence MLGFYVTFIFFLVCLFTYFFL. C444 serves as a coordination point for heme.

It belongs to the cytochrome P450 family. Requires heme as cofactor. Expressed in the expanding regions of the inflorescence stems, specifically to the epidermal pavement cells, petioles and siliques.

Its subcellular location is the endoplasmic reticulum membrane. Functionally, involved in the formation of secondary alcohols and ketones in stem cuticular wax. Catalyzes the hydroxylation of a methylene unit in the middle of alkane molecules to form secondary alcohols and possibly also a second hydroxylation leading to the corresponding ketones. This Arabidopsis thaliana (Mouse-ear cress) protein is Alkane hydroxylase MAH1.